The chain runs to 130 residues: Acyl carrier protein 2, chloroplastic (130 aa).

A chloroplast-targeting transit peptide spans 1-48; the sequence is MASITGSSVSFKCAPLQSSFNSKNYALKSSVTFWRRTPVMPRGLSVSC. Residues 52–127 enclose the Carrier domain; it reads PEMVTKVSDI…EAADMIEALQ (76 aa). Residue Ser-87 is modified to O-(pantetheine 4'-phosphoryl)serine.

This sequence belongs to the acyl carrier protein (ACP) family. Post-translationally, 4'-phosphopantetheine is transferred from CoA to a specific serine of apo-ACP by acpS. This modification is essential for activity because fatty acids are bound in thioester linkage to the sulfhydryl of the prosthetic group. As to expression, roots, leaves and seeds.

The protein resides in the plastid. The protein localises to the chloroplast. Its pathway is lipid metabolism; fatty acid biosynthesis. Functionally, carrier of the growing fatty acid chain in fatty acid biosynthesis. In Spinacia oleracea (Spinach), this protein is Acyl carrier protein 2, chloroplastic (ACL1.2).